Here is a 512-residue protein sequence, read N- to C-terminus: tRNA-2-methylthio-N(6)-dimethylallyladenosine synthase (512 aa).

One can recognise an MTTase N-terminal domain in the interval 17–133; it reads RTYEVRTFGC…LPTLLERSAH (117 aa). Residues cysteine 26, cysteine 62, cysteine 96, cysteine 170, cysteine 174, and cysteine 177 each coordinate [4Fe-4S] cluster. The Radical SAM core domain maps to 156–392; that stretch reads RESAYAGWVS…LALQERISEE (237 aa). In terms of domain architecture, TRAM spans 395 to 461; sequence RKLIGTTQEL…PHFLIADGGV (67 aa). The tract at residues 473-512 is disordered; sequence TELGETPTTAPVGVGLGMPSIKKPEPTTAGGCSTGGCGCE.

It belongs to the methylthiotransferase family. MiaB subfamily. As to quaternary structure, monomer. It depends on [4Fe-4S] cluster as a cofactor.

The protein resides in the cytoplasm. It carries out the reaction N(6)-dimethylallyladenosine(37) in tRNA + (sulfur carrier)-SH + AH2 + 2 S-adenosyl-L-methionine = 2-methylsulfanyl-N(6)-dimethylallyladenosine(37) in tRNA + (sulfur carrier)-H + 5'-deoxyadenosine + L-methionine + A + S-adenosyl-L-homocysteine + 2 H(+). Functionally, catalyzes the methylthiolation of N6-(dimethylallyl)adenosine (i(6)A), leading to the formation of 2-methylthio-N6-(dimethylallyl)adenosine (ms(2)i(6)A) at position 37 in tRNAs that read codons beginning with uridine. In Corynebacterium jeikeium (strain K411), this protein is tRNA-2-methylthio-N(6)-dimethylallyladenosine synthase.